The sequence spans 222 residues: MKKKQQSSAKFAVILTVVVVVLLAAIVIINNKTEQGNDAVSGQPSIKGQPVLGKDDAPVTVVEFGDYKCPSCKVFNSDIFPKIQKDFIDKGDVKFSFVNVMFHGKGSRLAALASEEVWKEDPDSFWDFHEKLFEKQPDTEQEWVTPGLLGDLAKSTTKIKPETLKENLDKETFASQVEKDSDLNQKMNIQATPTIYVNDKVIKNFADYDEIKETIEKELKGK.

The N-terminal stretch at 1–36 is a signal peptide; that stretch reads MKKKQQSSAKFAVILTVVVVVLLAAIVIINNKTEQG. Positions 37 to 220 constitute a Thioredoxin domain; it reads NDAVSGQPSI…IKETIEKELK (184 aa). The cysteines at positions 69 and 72 are disulfide-linked.

Belongs to the thioredoxin family. DsbA subfamily.

It localises to the cell membrane. It is found in the membrane raft. Its function is as follows. Required for the stabilization, possibly via formation of a disulfide bond, of the obligatory competence protein ComGC. May be required for the stability of secreted proteins with disulfide bonds. Not required for sporulation. In Bacillus subtilis (strain 168), this protein is Disulfide bond formation protein D (bdbD).